We begin with the raw amino-acid sequence, 614 residues long: 1-deoxy-D-xylulose-5-phosphate synthase (614 aa).

Thiamine diphosphate is bound by residues H74 and 115 to 117; that span reads AHS. D146 lines the Mg(2+) pocket. Residues 147–148, N175, Y282, and E363 contribute to the thiamine diphosphate site; that span reads GA. N175 provides a ligand contact to Mg(2+).

It belongs to the transketolase family. DXPS subfamily. In terms of assembly, homodimer. Requires Mg(2+) as cofactor. It depends on thiamine diphosphate as a cofactor.

It carries out the reaction D-glyceraldehyde 3-phosphate + pyruvate + H(+) = 1-deoxy-D-xylulose 5-phosphate + CO2. It functions in the pathway metabolic intermediate biosynthesis; 1-deoxy-D-xylulose 5-phosphate biosynthesis; 1-deoxy-D-xylulose 5-phosphate from D-glyceraldehyde 3-phosphate and pyruvate: step 1/1. Its function is as follows. Catalyzes the acyloin condensation reaction between C atoms 2 and 3 of pyruvate and glyceraldehyde 3-phosphate to yield 1-deoxy-D-xylulose-5-phosphate (DXP). In Nitrosospira multiformis (strain ATCC 25196 / NCIMB 11849 / C 71), this protein is 1-deoxy-D-xylulose-5-phosphate synthase.